Consider the following 956-residue polypeptide: Translation initiation factor IF-2 (956 aa).

The disordered stretch occupies residues 33-370 (SHASSVEEAD…PVTERKFHEL (338 aa)). Over residues 46 to 60 (IASSFSAGVTKNVQA) the composition is skewed to polar residues. Residues 63–73 (AKDKQVAEQKA) show a composition bias toward basic and acidic residues. Over residues 76-100 (AKATTPQPAASKAAEKPAAATQEAS) the composition is skewed to low complexity. Composition is skewed to basic and acidic residues over residues 112–125 (FKAE…EQVA), 134–143 (SNDRKSDYRQ), and 179–192 (NDGH…DKNR). Positions 199-213 (RQQDTGRQGQTQAGA) are enriched in low complexity. Composition is skewed to basic and acidic residues over residues 234 to 258 (ARQR…RQEA) and 266 to 276 (QTEDKKHREAS). The segment covering 277-293 (AKATESVASMAAASVAK) has biased composition (low complexity). Basic and acidic residues predominate over residues 303-320 (NRPDKGHDRDHGLEDGQK). The span at 325 to 343 (SWNSQNQVRNQKNSNWNNN) shows a compositional bias: low complexity. Positions 344-354 (KKNKKGKHHKN) are enriched in basic residues. The region spanning 457–626 (ERAPVVTIMG…LLVAEVEELK (170 aa)) is the tr-type G domain. A G1 region spans residues 466 to 473 (GHVDHGKT). 466–473 (GHVDHGKT) is a binding site for GTP. Positions 491 to 495 (GITQH) are G2. Residues 512–515 (DTPG) form a G3 region. Residues 512–516 (DTPGH) and 566–569 (NKID) contribute to the GTP site. Positions 566–569 (NKID) are G4. A G5 region spans residues 602-604 (SAK).

The protein belongs to the TRAFAC class translation factor GTPase superfamily. Classic translation factor GTPase family. IF-2 subfamily.

Its subcellular location is the cytoplasm. Functionally, one of the essential components for the initiation of protein synthesis. Protects formylmethionyl-tRNA from spontaneous hydrolysis and promotes its binding to the 30S ribosomal subunits. Also involved in the hydrolysis of GTP during the formation of the 70S ribosomal complex. The chain is Translation initiation factor IF-2 from Streptococcus equi subsp. equi (strain 4047).